Consider the following 170-residue polypeptide: Large ribosomal subunit protein bL9 (170 aa).

Positions 149 to 170 (RTEEADAEESAAEEPAVEEAAE) are disordered. The segment covering 153–170 (ADAEESAAEEPAVEEAAE) has biased composition (acidic residues).

Belongs to the bacterial ribosomal protein bL9 family.

Functionally, binds to the 23S rRNA. This chain is Large ribosomal subunit protein bL9, found in Oleidesulfovibrio alaskensis (strain ATCC BAA-1058 / DSM 17464 / G20) (Desulfovibrio alaskensis).